The chain runs to 379 residues: Sulfate adenylyltransferase (379 aa).

The protein belongs to the sulfate adenylyltransferase family.

The catalysed reaction is sulfate + ATP + H(+) = adenosine 5'-phosphosulfate + diphosphate. The protein operates within sulfur metabolism; hydrogen sulfide biosynthesis; sulfite from sulfate: step 1/3. The sequence is that of Sulfate adenylyltransferase from Thermococcus onnurineus (strain NA1).